Here is a 773-residue protein sequence, read N- to C-terminus: Ergothioneine biosynthesis protein 1 (773 aa).

Positions Pro16–Tyr322 are L-histidine N(alpha)-methyltransferase. Tyr51 is a binding site for L-histidine. Residues Gly85, Lys91, Asp112, and Cys142–Phe143 contribute to the S-adenosyl-L-methionine site. L-histidine contacts are provided by residues Asn172, Tyr212, and Glu287–Ser289. The segment at Ala347–Lys772 is hercynylcysteine S-oxide synthase. Residues His382, His476, and His480 each coordinate Fe cation.

This sequence in the N-terminal section; belongs to the methyltransferase superfamily. EgtD family. In the C-terminal section; belongs to the EgtB family. Fe(2+) is required as a cofactor.

The protein localises to the cytoplasm. The protein resides in the nucleus. It carries out the reaction L-histidine + 3 S-adenosyl-L-methionine = hercynine + 3 S-adenosyl-L-homocysteine + 3 H(+). It catalyses the reaction hercynine + L-cysteine + O2 = S-(hercyn-2-yl)-L-cysteine S-oxide + H2O. It functions in the pathway amino-acid biosynthesis; ergothioneine biosynthesis. Catalyzes the SAM-dependent triple methylation of the alpha-amino group of histidine to form hercynine and subsequent conjugation with cysteine and oxygen to form hercynylcysteine sulfoxide, the first two steps in the biosynthesis pathway of ergothioneine. May play a role in meiosis. The protein is Ergothioneine biosynthesis protein 1 of Schizosaccharomyces pombe (strain 972 / ATCC 24843) (Fission yeast).